A 421-amino-acid chain; its full sequence is UDP-N-acetylglucosamine 1-carboxyvinyltransferase (421 aa).

22-23 (KN) provides a ligand contact to phosphoenolpyruvate. Arg93 lines the UDP-N-acetyl-alpha-D-glucosamine pocket. Cys117 acts as the Proton donor in catalysis. 2-(S-cysteinyl)pyruvic acid O-phosphothioketal is present on Cys117. Residues 122 to 126 (RPVDL), Asp308, and Ile330 contribute to the UDP-N-acetyl-alpha-D-glucosamine site.

This sequence belongs to the EPSP synthase family. MurA subfamily.

It localises to the cytoplasm. It catalyses the reaction phosphoenolpyruvate + UDP-N-acetyl-alpha-D-glucosamine = UDP-N-acetyl-3-O-(1-carboxyvinyl)-alpha-D-glucosamine + phosphate. The protein operates within cell wall biogenesis; peptidoglycan biosynthesis. In terms of biological role, cell wall formation. Adds enolpyruvyl to UDP-N-acetylglucosamine. In Pseudomonas putida (strain ATCC 700007 / DSM 6899 / JCM 31910 / BCRC 17059 / LMG 24140 / F1), this protein is UDP-N-acetylglucosamine 1-carboxyvinyltransferase.